We begin with the raw amino-acid sequence, 76 residues long: Conotoxin VnMEKL-021 (76 aa).

Positions 1–19 (MQKLTILLLVAAVLMSTQA) are cleaved as a signal peptide. Residues 20 to 37 (LIKGGGEKRPKEKIKFLS) constitute a propeptide that is removed on maturation. Cystine bridges form between Cys51/Cys65, Cys58/Cys69, and Cys64/Cys73.

Belongs to the conotoxin O2 superfamily. In terms of tissue distribution, expressed by the venom duct.

The protein localises to the secreted. The chain is Conotoxin VnMEKL-021 from Conus ventricosus (Mediterranean cone).